The sequence spans 175 residues: Adenylate kinase isoenzyme 6 homolog (175 aa).

Positions 18, 20, 21, 22, and 23 each coordinate ATP. The interval 38-61 (CIGDVVKENHLHFGFDEKWKTYDV) is NMPbind. Residues 113–123 (SRGYSLEKIQE) form an LID region. Arginine 114 contacts ATP.

It belongs to the adenylate kinase family. AK6 subfamily. In terms of assembly, interacts with small ribosomal subunit protein uS11. Not a structural component of 43S pre-ribosomes, but transiently interacts with them by binding to uS11.

The protein localises to the cytoplasm. It is found in the nucleus. The catalysed reaction is AMP + ATP = 2 ADP. It carries out the reaction ATP + H2O = ADP + phosphate + H(+). Broad-specificity nucleoside monophosphate (NMP) kinase that catalyzes the reversible transfer of the terminal phosphate group between nucleoside triphosphates and monophosphates. Also has ATPase activity. Involved in the late cytoplasmic maturation steps of the 40S ribosomal particles, specifically 18S rRNA maturation. While NMP activity is not required for ribosome maturation, ATPase activity is. Associates transiently with small ribosomal subunit protein uS11. ATP hydrolysis breaks the interaction with uS11. May temporarily remove uS11 from the ribosome to enable a conformational change of the ribosomal RNA that is needed for the final maturation step of the small ribosomal subunit. Its NMP activity may have a role in nuclear energy homeostasis. The sequence is that of Adenylate kinase isoenzyme 6 homolog (fap7) from Schizosaccharomyces pombe (strain 972 / ATCC 24843) (Fission yeast).